A 392-amino-acid chain; its full sequence is Speckle-type POZ protein-like (392 aa).

One can recognise an MATH domain in the interval 31–161; the sequence is KFSYMWTINN…DDKLTLFCEV (131 aa). In terms of domain architecture, BTB spans 200–267; the sequence is TDCSFFVRGQ…IYTGRAPNLD (68 aa).

Belongs to the Tdpoz family. As to quaternary structure, homodimer. Heterodimer with SPOP. Component of cullin-RING-based BCR (BTB-CUL3-RBX1) E3 ubiquitin-protein ligase complexes containing homodimeric SPOPL or the heterodimer formed by SPOP and SPOPL. Interacts with CUL3 and MACROH2A1.

The protein resides in the nucleus. It functions in the pathway protein modification; protein ubiquitination. Its function is as follows. Component of a cullin-RING-based BCR (BTB-CUL3-RBX1) E3 ubiquitin-protein ligase complex that mediates the ubiquitination and subsequent proteasomal degradation of target proteins, but with relatively low efficiency. Cullin-RING-based BCR (BTB-CUL3-RBX1) E3 ubiquitin-protein ligase complexes containing homodimeric SPOPL or the heterodimer formed by SPOP and SPOPL are less efficient than ubiquitin ligase complexes containing only SPOP. May function to down-regulate the activity of cullin-RING-based BCR (BTB-CUL3-RBX1) E3 ubiquitin-protein ligase complexes that contain SPOP. The polypeptide is Speckle-type POZ protein-like (SPOPL) (Homo sapiens (Human)).